Consider the following 212-residue polypeptide: Large ribosomal subunit protein bL25 (212 aa).

Basic and acidic residues predominate over residues 1 to 16 (MKTRIDLTVEPRETGK). The segment at 1–22 (MKTRIDLTVEPRETGKHNSRGL) is disordered.

It belongs to the bacterial ribosomal protein bL25 family. CTC subfamily. Part of the 50S ribosomal subunit; part of the 5S rRNA/L5/L18/L25 subcomplex. Contacts the 5S rRNA. Binds to the 5S rRNA independently of L5 and L18.

Functionally, this is one of the proteins that binds to the 5S RNA in the ribosome where it forms part of the central protuberance. In Bdellovibrio bacteriovorus (strain ATCC 15356 / DSM 50701 / NCIMB 9529 / HD100), this protein is Large ribosomal subunit protein bL25.